A 317-amino-acid polypeptide reads, in one-letter code: Probable GTP 3',8-cyclase (317 aa).

The region spanning 4 to 223 (RYGRPLEDLR…KSEIREKHFR (220 aa)) is the Radical SAM core domain. R13 is a binding site for GTP. [4Fe-4S] cluster is bound by residues C20, C24, and C27. A GTP-binding site is contributed by K61. G65 provides a ligand contact to S-adenosyl-L-methionine. Residue T91 coordinates GTP. S115 is an S-adenosyl-L-methionine binding site. K152 is a binding site for GTP. C246 and C249 together coordinate [4Fe-4S] cluster. A GTP-binding site is contributed by 251–253 (RVR). Residue C263 participates in [4Fe-4S] cluster binding.

This sequence belongs to the radical SAM superfamily. MoaA family. Requires [4Fe-4S] cluster as cofactor.

The catalysed reaction is GTP + AH2 + S-adenosyl-L-methionine = (8S)-3',8-cyclo-7,8-dihydroguanosine 5'-triphosphate + 5'-deoxyadenosine + L-methionine + A + H(+). The protein operates within cofactor biosynthesis; molybdopterin biosynthesis. Functionally, catalyzes the cyclization of GTP to (8S)-3',8-cyclo-7,8-dihydroguanosine 5'-triphosphate. The sequence is that of Probable GTP 3',8-cyclase from Metallosphaera sedula (strain ATCC 51363 / DSM 5348 / JCM 9185 / NBRC 15509 / TH2).